We begin with the raw amino-acid sequence, 388 residues long: Dual-specificity RNA methyltransferase RlmN (388 aa).

Glu-109 acts as the Proton acceptor in catalysis. Residues 115-354 (EEDRATLCVS…TIVRKTRGDD (240 aa)) form the Radical SAM core domain. Cysteines 122 and 359 form a disulfide. [4Fe-4S] cluster is bound by residues Cys-129, Cys-133, and Cys-136. Residues 183–184 (GE), Ser-215, 237–239 (SLH), and Asn-316 contribute to the S-adenosyl-L-methionine site. Catalysis depends on Cys-359, which acts as the S-methylcysteine intermediate.

The protein belongs to the radical SAM superfamily. RlmN family. [4Fe-4S] cluster is required as a cofactor.

Its subcellular location is the cytoplasm. It carries out the reaction adenosine(2503) in 23S rRNA + 2 reduced [2Fe-2S]-[ferredoxin] + 2 S-adenosyl-L-methionine = 2-methyladenosine(2503) in 23S rRNA + 5'-deoxyadenosine + L-methionine + 2 oxidized [2Fe-2S]-[ferredoxin] + S-adenosyl-L-homocysteine. It catalyses the reaction adenosine(37) in tRNA + 2 reduced [2Fe-2S]-[ferredoxin] + 2 S-adenosyl-L-methionine = 2-methyladenosine(37) in tRNA + 5'-deoxyadenosine + L-methionine + 2 oxidized [2Fe-2S]-[ferredoxin] + S-adenosyl-L-homocysteine. Its function is as follows. Specifically methylates position 2 of adenine 2503 in 23S rRNA and position 2 of adenine 37 in tRNAs. m2A2503 modification seems to play a crucial role in the proofreading step occurring at the peptidyl transferase center and thus would serve to optimize ribosomal fidelity. This chain is Dual-specificity RNA methyltransferase RlmN, found in Enterobacter sp. (strain 638).